Reading from the N-terminus, the 360-residue chain is Photosystem II protein D1 (360 aa).

The next 3 helical transmembrane spans lie at 30–47, 119–134, and 143–157; these read YVGW…AAAI, HFLI…QWEL, and WICV…AAFA. H119 contacts chlorophyll a. W127 contacts pheophytin a. D171 and E190 together coordinate [CaMn4O5] cluster. The helical transmembrane segment at 198 to 219 threads the bilayer; it reads FHMAGVAGMFGGSLFSAMHGSL. Position 199 (H199) interacts with chlorophyll a. Residues H216 and 265–266 each bind a quinone; that span reads SF. Residue H216 coordinates Fe cation. H273 lines the Fe cation pocket. The chain crosses the membrane as a helical span at residues 275–289; the sequence is FLAIFPVVCVWLTSM. [CaMn4O5] cluster is bound by residues H333, E334, D343, and A345. Residues 346–360 constitute a propeptide that is removed on maturation; it reads AAESTSVALVAPSIG.

It belongs to the reaction center PufL/M/PsbA/D family. In terms of assembly, PSII is composed of 1 copy each of membrane proteins PsbA, PsbB, PsbC, PsbD, PsbE, PsbF, PsbH, PsbI, PsbJ, PsbK, PsbL, PsbM, PsbT, PsbX, PsbY, Psb30/Ycf12, peripheral proteins PsbO, CyanoQ (PsbQ), PsbU, PsbV and a large number of cofactors. It forms dimeric complexes. The D1/D2 heterodimer binds P680, chlorophylls that are the primary electron donor of PSII, and subsequent electron acceptors. It shares a non-heme iron and each subunit binds pheophytin, quinone, additional chlorophylls, carotenoids and lipids. D1 provides most of the ligands for the Mn4-Ca-O5 cluster of the oxygen-evolving complex (OEC). There is also a Cl(-1) ion associated with D1 and D2, which is required for oxygen evolution. The PSII complex binds additional chlorophylls, carotenoids and specific lipids. serves as cofactor. Tyr-162 forms a radical intermediate that is referred to as redox-active TyrZ, YZ or Y-Z. Post-translationally, C-terminally processed by CtpA; processing is essential to allow assembly of the oxygen-evolving complex and thus photosynthetic growth.

It localises to the cellular thylakoid membrane. It catalyses the reaction 2 a plastoquinone + 4 hnu + 2 H2O = 2 a plastoquinol + O2. Functionally, photosystem II (PSII) is a light-driven water:plastoquinone oxidoreductase that uses light energy to abstract electrons from H(2)O, generating O(2) and a proton gradient subsequently used for ATP formation. It consists of a core antenna complex that captures photons, and an electron transfer chain that converts photonic excitation into a charge separation. The D1/D2 (PsbA/PsbD) reaction center heterodimer binds P680, the primary electron donor of PSII as well as several subsequent electron acceptors. The polypeptide is Photosystem II protein D1 (Prochlorococcus marinus (strain SARG / CCMP1375 / SS120)).